We begin with the raw amino-acid sequence, 376 residues long: Integrator complex assembly factor WDR73 (376 aa).

WD repeat units follow at residues Phe84–Ile123, Ala276–Ser316, and Thr337–Arg376. The segment at Ser316 to Ser336 is disordered.

Belongs to the WD repeat WDR73 family.

The protein localises to the cytoplasm. It is found in the cytoskeleton. It localises to the spindle. The protein resides in the spindle pole. Its subcellular location is the cleavage furrow. Component of a multiprotein complex required for the assembly of the RNA endonuclease module of the integrator complex. Associates with ints9 and ints11 in the cytoplasm, stabilizing the ints9-ints11 heterodimer and blocking the active site of ints11. Brat1 then joins the complex and plugs the active site of ints11, leading to wdr73 release and nuclear import of ints9 and ints11. This is Integrator complex assembly factor WDR73 (wdr73) from Danio rerio (Zebrafish).